A 937-amino-acid chain; its full sequence is Aconitate hydratase A (937 aa).

Residues 410-450 (MANEGGFQPGSTSDLDNYNASWPGEGESAAANAEGRPSNPV) form a disordered region. A compositionally biased stretch (polar residues) spans 418-429 (PGSTSDLDNYNA). A compositionally biased stretch (low complexity) spans 433-444 (GEGESAAANAEG). Residues cysteine 475, cysteine 541, and cysteine 544 each contribute to the [4Fe-4S] cluster site.

It belongs to the aconitase/IPM isomerase family. Monomer. [4Fe-4S] cluster is required as a cofactor.

The enzyme catalyses citrate = D-threo-isocitrate. It carries out the reaction (2S,3R)-3-hydroxybutane-1,2,3-tricarboxylate = 2-methyl-cis-aconitate + H2O. It functions in the pathway carbohydrate metabolism; tricarboxylic acid cycle; isocitrate from oxaloacetate: step 2/2. The protein operates within organic acid metabolism; propanoate degradation. Its function is as follows. Involved in the catabolism of short chain fatty acids (SCFA) via the tricarboxylic acid (TCA)(acetyl degradation route) and probably via the 2-methylcitrate cycle I (propionate degradation route). Catalyzes the reversible isomerization of citrate to isocitrate via cis-aconitate. Could catalyze the hydration of 2-methyl-cis-aconitate to yield (2R,3S)-2-methylisocitrate. The apo form of AcnA functions as a RNA-binding regulatory protein. The polypeptide is Aconitate hydratase A (acn) (Corynebacterium efficiens (strain DSM 44549 / YS-314 / AJ 12310 / JCM 11189 / NBRC 100395)).